The primary structure comprises 197 residues: Holliday junction branch migration complex subunit RuvA (197 aa).

The segment at 1–64 (MYEYIKGKYI…EDFIGIYGFL (64 aa)) is domain I. The interval 65–143 (TKDELSMFKL…IDISEEDDEQ (79 aa)) is domain II. Residues 144 to 148 (IINKV) form a flexible linker region. A domain III region spans residues 149-197 (TDDKKVLEAVAALVTLGYSEKEASKVINLCDKNNSLEQIIKEALKHLMK).

The protein belongs to the RuvA family. Homotetramer. Forms an RuvA(8)-RuvB(12)-Holliday junction (HJ) complex. HJ DNA is sandwiched between 2 RuvA tetramers; dsDNA enters through RuvA and exits via RuvB. An RuvB hexamer assembles on each DNA strand where it exits the tetramer. Each RuvB hexamer is contacted by two RuvA subunits (via domain III) on 2 adjacent RuvB subunits; this complex drives branch migration. In the full resolvosome a probable DNA-RuvA(4)-RuvB(12)-RuvC(2) complex forms which resolves the HJ.

It is found in the cytoplasm. The RuvA-RuvB-RuvC complex processes Holliday junction (HJ) DNA during genetic recombination and DNA repair, while the RuvA-RuvB complex plays an important role in the rescue of blocked DNA replication forks via replication fork reversal (RFR). RuvA specifically binds to HJ cruciform DNA, conferring on it an open structure. The RuvB hexamer acts as an ATP-dependent pump, pulling dsDNA into and through the RuvAB complex. HJ branch migration allows RuvC to scan DNA until it finds its consensus sequence, where it cleaves and resolves the cruciform DNA. In Clostridium botulinum (strain Loch Maree / Type A3), this protein is Holliday junction branch migration complex subunit RuvA.